A 139-amino-acid polypeptide reads, in one-letter code: Prostate-associated microseminoprotein (139 aa).

Positions 1–35 (MALRMLWAGQAKGILGGWRTICLVVSLFLQHPGVS) are cleaved as a signal peptide. Disulfide bonds link C38/C78, C46/C69, C64/C100, C67/C77, and C91/C114. Residues 116–139 (GGGPDLEWGSANTPAPGASAPHSS) form a disordered region.

Belongs to the beta-microseminoprotein family.

The protein localises to the secreted. Functionally, acts as a ligand for C-C chemokine receptor CCR2. Signals through binding and activation of CCR2 and induces a strong chemotactic response and mobilization of intracellular calcium ions. Exhibits a chemotactic activity for monocytes and lymphocytes but not neutrophils. The protein is Prostate-associated microseminoprotein (Msmp) of Mus musculus (Mouse).